A 132-amino-acid chain; its full sequence is Small ribosomal subunit protein eS12 (132 aa).

A2 is modified (N-acetylalanine). Position 129 is an N6-succinyllysine (K129).

Belongs to the eukaryotic ribosomal protein eS12 family. Part of the small subunit (SSU) processome, composed of more than 70 proteins and the RNA chaperone small nucleolar RNA (snoRNA) U3. Subunit of the 40S ribosomal complex.

The protein localises to the nucleus. The protein resides in the nucleolus. In terms of biological role, part of the small subunit (SSU) processome, first precursor of the small eukaryotic ribosomal subunit. During the assembly of the SSU processome in the nucleolus, many ribosome biogenesis factors, an RNA chaperone and ribosomal proteins associate with the nascent pre-rRNA and work in concert to generate RNA folding, modifications, rearrangements and cleavage as well as targeted degradation of pre-ribosomal RNA by the RNA exosome. Subunit of the 40S ribosomal complex. This is Small ribosomal subunit protein eS12 (Rps12) from Rattus norvegicus (Rat).